The chain runs to 223 residues: MSDHDSGNARRGRASFGAFVRKPVERGAPAGAAAEQGGLDAVQALPDDAVEVGAVVDAYGLKGWVKVATHADAGRGGDALLSARRWWLEKGTQRFSARIVQSKTHGDTVVAQPAGVGDRDAALALRGFRVFVRREDFPALAADEFYWVDLIGLDVVNEQSATLGKVVGMIDNGAHSIMRVEYPSVGKDGRPAAAERLIPFVGVYVKTVDQAARRIVVDWEADY.

Residues 142-223 enclose the PRC barrel domain; sequence ADEFYWVDLI…RIVVDWEADY (82 aa).

Belongs to the RimM family. As to quaternary structure, binds ribosomal protein uS19.

The protein localises to the cytoplasm. In terms of biological role, an accessory protein needed during the final step in the assembly of 30S ribosomal subunit, possibly for assembly of the head region. Essential for efficient processing of 16S rRNA. May be needed both before and after RbfA during the maturation of 16S rRNA. It has affinity for free ribosomal 30S subunits but not for 70S ribosomes. The polypeptide is Ribosome maturation factor RimM (Burkholderia multivorans (strain ATCC 17616 / 249)).